The following is a 674-amino-acid chain: Polyunsaturated fatty acid 5-lipoxygenase (674 aa).

In terms of domain architecture, PLAT spans 2 to 118 (PSYTVTVATG…EVVLRDGRAK (117 aa)). Residues glycine 17, threonine 18, aspartate 19, asparagine 44, aspartate 45, glutamate 47, aspartate 79, and aspartate 80 each contribute to the Ca(2+) site. Residues 119 to 674 (LARDDQIHIL…PDRIPNSVAI (556 aa)) form the Lipoxygenase domain. Position 272 is a phosphoserine; by MAPKAPK2 (serine 272). Fe cation-binding residues include histidine 368 and histidine 373. At serine 524 the chain carries Phosphoserine; by PKA. Residues histidine 551, asparagine 555, and isoleucine 674 each coordinate Fe cation.

The protein belongs to the lipoxygenase family. Homodimer. Interacts with ALOX5AP and LTC4S. Interacts with COTL1, the interaction is required for stability and efficient catalytic activity. Interacts with PIK3R1; this interaction bridges ALOX5 with CD40 after CD40 ligation in B cells and leads to the production of reactive oxygen species (ROS). Interacts (via PLAT domain) with DICER1 (via Dicer dsRNA-binding fold domain); this interaction enhances arachidonate 5-lipoxygenase activity and modifies the miRNA precursor processing activity of DICER1. Fe cation is required as a cofactor. In terms of processing, serine phosphorylation by MAPKAPK2 is stimulated by arachidonic acid. Phosphorylation on Ser-524 by PKA has an inhibitory effect. Phosphorylation on Ser-272 prevents export from the nucleus. Phosphorylation at Ser-524 is stimulated by 8-bromo-3',5'-cyclic AMP or prostaglandin E2.

Its subcellular location is the cytoplasm. It is found in the nucleus matrix. The protein localises to the nucleus membrane. It localises to the perinuclear region. The protein resides in the cytosol. Its subcellular location is the nucleus envelope. It is found in the nucleus intermembrane space. It catalyses the reaction (5Z,8Z,11Z,14Z)-eicosatetraenoate + O2 = leukotriene A4 + H2O. The catalysed reaction is 18-HEPE + O2 = (5S)-hydroperoxy-18-hydroxy-(7E,9E,11Z,14Z,16E)-eicosapentaenoate. The enzyme catalyses (18R)-hydroxy-(5Z,8Z,11Z,14Z,16E)-eicosapentaenoate + O2 = (5S)-hydroperoxy-(18R)-hydroxy-(6E,8Z,11Z,14Z,16E)-eicosapentaenoate. It carries out the reaction (18S)-hydroxy-(5Z,8Z,11Z,14Z,16E)-eicosapentaenoate + O2 = (5S)-hydroperoxy-(18S)-hydroxy-(6E,8Z,11Z,14Z,16E)-eicosapentaenoate. It catalyses the reaction (5S)-hydroperoxy-(18S)-hydroxy-(6E,8Z,11Z,14Z,16E)-eicosapentaenoate = (5S,6S)-epoxy-(18S)-hydroxy-(7E,9E,11Z,14Z,16E)-eicosapentaenoate + H2O. The catalysed reaction is (5S)-hydroperoxy-(18R)-hydroxy-(6E,8Z,11Z,14Z,16E)-eicosapentaenoate = (5S,6S)-epoxy-(18R)-hydroxy-(7E,9E,11Z,14Z,16E)-eicosapentaenoate + H2O. The enzyme catalyses (5S)-hydroperoxy-18-hydroxy-(7E,9E,11Z,14Z,16E)-eicosapentaenoate = (5S,6S)-epoxy-18-hydroxy-(7E,9E,11Z,14Z,16E)-eicosapentaenoate + H2O. It carries out the reaction (5Z,8Z,11Z,14Z)-eicosatetraenoate + O2 = (5S)-hydroperoxy-(6E,8Z,11Z,14Z)-eicosatetraenoate. It catalyses the reaction (15S)-hydroxy-(5Z,8Z,11Z,13E)-eicosatetraenoate + O2 = (5S)-hydroperoxy-(15S)-hydroxy-(6E,8Z,11Z,13E)-eicosatetraenoate. The catalysed reaction is (5S)-hydroperoxy-(6E,8Z,11Z,14Z)-eicosatetraenoate = leukotriene A4 + H2O. The enzyme catalyses (5Z,8Z,11Z,14Z)-eicosatetraenoate + O2 = (8S)-hydroperoxy-(5Z,9E,11Z,14Z)-eicosatetraenoate. It carries out the reaction (5Z,8Z,11Z,14Z)-eicosatetraenoate + O2 = (12S)-hydroperoxy-(5Z,8Z,10E,14Z)-eicosatetraenoate. It catalyses the reaction (5Z,8Z)-eicosadienoate + O2 = (5S)-hydroperoxy-(6E,8Z)-eicosadienoate. The catalysed reaction is (12S)-hydroxy-(5Z,8Z,10E,14Z)-eicosatetraenoate + O2 = (5S)-hydroperoxy-(12S)-hydroxy-(6E,8Z,10E,14Z)-eicosatetraenoate. The enzyme catalyses (5Z,8Z,11Z,14Z,17Z)-eicosapentaenoate + O2 = 5-hydroperoxy-(6E,8Z,11Z,14Z,17Z)-eicosapentaenoate. It carries out the reaction (4Z,7Z,10Z,13Z,16Z,19Z)-docosahexaenoate + O2 = (14S)-hydroperoxy-(4Z,7Z,10Z,12E,16Z,19Z)-docosahexaenoate. It catalyses the reaction (4Z,7Z,10Z,13Z,16Z,19Z)-docosahexaenoate + O2 = (7S)-hydroperoxy-(4Z,8E,10Z,13Z,16Z,19Z)-docosahexaenoate. The catalysed reaction is (4Z,7Z,10Z,13Z,16Z,19Z)-docosahexaenoate + O2 = (17S)-hydroperoxy-(4Z,7Z,10Z,13Z,15E,19Z)-docosahexaenoate. Its pathway is lipid metabolism; leukotriene A4 biosynthesis. Undergoes a sequential loss of the oxygenase and pseudoperoxidase activities which is dependent on the structural characteristics of the substrate for the reaction, on oxygen concentration and on exposure to phospholipids and calcium. 15-HETE and other 15-mono-hydroxyeicosanoids exhibit the highest inhibitory potencies in their capability of suppressing 5-lipoxygenation of arachidonic acid, whereas the other HETEs, (5S,15S)-dihydroxy-(6E,8Z,11Z,13E)-eicosatetraenoic acid (5,15-diHETE) as well as octadecanoids, are modest or poor inhibitors. The formation of (5S)-hydroperoxy-(15S)-hydroxy-(6E,8Z,11Z,13E)-eicosatetraenoate is strongly stimulated by either hydroperoxypolyenoic fatty acids or arachidonic acid. Arachidonate 5-lipoxygenase and leukotriene A4 synthase activities are allosterically increased by ATP. Its function is as follows. Catalyzes the oxygenation of arachidonate ((5Z,8Z,11Z,14Z)-eicosatetraenoate) to 5-hydroperoxyeicosatetraenoate (5-HPETE) followed by the dehydration to 5,6- epoxyeicosatetraenoate (Leukotriene A4/LTA4), the first two steps in the biosynthesis of leukotrienes, which are potent mediators of inflammation. Also catalyzes the oxygenation of arachidonate into 8-hydroperoxyicosatetraenoate (8-HPETE) and 12-hydroperoxyicosatetraenoate (12-HPETE). Displays lipoxin synthase activity being able to convert (15S)-HETE into a conjugate tetraene. Although arachidonate is the preferred substrate, this enzyme can also metabolize oxidized fatty acids derived from arachidonate such as (15S)-HETE, eicosapentaenoate (EPA) such as (18R)- and (18S)-HEPE or docosahexaenoate (DHA) which lead to the formation of specialized pro-resolving mediators (SPM) lipoxin and resolvins E and D respectively, therefore it participates in anti-inflammatory responses. Oxidation of DHA directly inhibits endothelial cell proliferation and sprouting angiogenesis via peroxisome proliferator-activated receptor gamma (PPARgamma). It does not catalyze the oxygenation of linoleic acid and does not convert (5S)-HETE to lipoxin isomers. In addition to inflammatory processes, it participates in dendritic cell migration, wound healing through an antioxidant mechanism based on heme oxygenase-1 (HO-1) regulation expression, monocyte adhesion to the endothelium via ITGAM expression on monocytes. Moreover, it helps establish an adaptive humoral immunity by regulating primary resting B cells and follicular helper T cells and participates in the CD40-induced production of reactive oxygen species (ROS) after CD40 ligation in B cells through interaction with PIK3R1 that bridges ALOX5 with CD40. May also play a role in glucose homeostasis, regulation of insulin secretion and palmitic acid-induced insulin resistance via AMPK. Can regulate bone mineralization and fat cell differentiation increases in induced pluripotent stem cells. The chain is Polyunsaturated fatty acid 5-lipoxygenase from Homo sapiens (Human).